The chain runs to 339 residues: N-acetyl-gamma-glutamyl-phosphate reductase (339 aa).

Residue cysteine 144 is part of the active site.

This sequence belongs to the NAGSA dehydrogenase family. Type 1 subfamily.

The protein resides in the cytoplasm. It carries out the reaction N-acetyl-L-glutamate 5-semialdehyde + phosphate + NADP(+) = N-acetyl-L-glutamyl 5-phosphate + NADPH + H(+). It functions in the pathway amino-acid biosynthesis; L-arginine biosynthesis; N(2)-acetyl-L-ornithine from L-glutamate: step 3/4. Catalyzes the NADPH-dependent reduction of N-acetyl-5-glutamyl phosphate to yield N-acetyl-L-glutamate 5-semialdehyde. The sequence is that of N-acetyl-gamma-glutamyl-phosphate reductase from Methanobrevibacter smithii (strain ATCC 35061 / DSM 861 / OCM 144 / PS).